The primary structure comprises 324 residues: tRNA U34 carboxymethyltransferase (324 aa).

Residues K91, W105, K110, G130, 152 to 154, 181 to 182, M196, Y200, and R315 each bind carboxy-S-adenosyl-L-methionine; these read DPS and IE.

The protein belongs to the class I-like SAM-binding methyltransferase superfamily. CmoB family. In terms of assembly, homotetramer.

The catalysed reaction is carboxy-S-adenosyl-L-methionine + 5-hydroxyuridine(34) in tRNA = 5-carboxymethoxyuridine(34) in tRNA + S-adenosyl-L-homocysteine + H(+). Functionally, catalyzes carboxymethyl transfer from carboxy-S-adenosyl-L-methionine (Cx-SAM) to 5-hydroxyuridine (ho5U) to form 5-carboxymethoxyuridine (cmo5U) at position 34 in tRNAs. In Aliivibrio fischeri (strain MJ11) (Vibrio fischeri), this protein is tRNA U34 carboxymethyltransferase.